A 261-amino-acid polypeptide reads, in one-letter code: Aquaporin-8 (261 aa).

The Cytoplasmic portion of the chain corresponds to 1–36 (MSGETPMCSIDLSEVKAKETRMAGRFRVSWYEQYIQ). The helical transmembrane segment at 37-57 (PCVVELLGSALFIFIGCLSVI) threads the bilayer. C53 is modified (cysteine persulfide). C53 carries the post-translational modification Cysteine sulfenic acid (-SOH). Residues 58-84 (ENSPDTGLLQPALAHGLALGLIIATLG) are Extracellular-facing. The chain crosses the membrane as a helical span at residues 85–105 (NISGGHFNPAVSLAVTVIGGL). The NPA 1 signature appears at 92 to 94 (NPA). Residues 106–107 (KT) lie on the Cytoplasmic side of the membrane. The helical transmembrane segment at 108-128 (MLLIPYWISQIFGGLIGAALA) threads the bilayer. Over 129-156 (KVVSPEERFWNASGAAFAIVQEQEQVTE) the chain is Extracellular. N-linked (GlcNAc...) asparagine glycosylation occurs at N139. Residues 157–177 (ALGVEIILTILLVLAVCMGAV) traverse the membrane as a helical segment. The Cytoplasmic portion of the chain corresponds to 178–183 (NEKTMG). A helical transmembrane segment spans residues 184–204 (PLAPFSIGFSVIVDILAGGGI). The Extracellular portion of the chain corresponds to 205–228 (SGACMNPARAFGPAVVAGYWDFHW). Positions 210 to 212 (NPA) match the NPA 2 motif. The helical transmembrane segment at 229-249 (IYWLGPLLAGLFVGLLIRLFI) threads the bilayer. Topologically, residues 250–261 (GDEKTRLILKSR) are cytoplasmic.

This sequence belongs to the MIP/aquaporin (TC 1.A.8) family. Post-translationally, sulfenylation at Cys-53(C53-SOH) when hydrogen peroxide flows through the AQP8 channel, making it susceptible to hydrogen sulfide produced by CBS. In terms of processing, persulfidation at Cys-53 is required to gate AQP8 channel; under stress condition, hydrogen peroxide accumulates in the cell leading to CBS activation that produces hydrogen sulfide inducing persulfidation of oxidized Cys-53 (C53-SOH). N-glycosylated.

The protein localises to the cell membrane. It localises to the mitochondrion inner membrane. It is found in the apical cell membrane. The protein resides in the basolateral cell membrane. Its subcellular location is the smooth endoplasmic reticulum membrane. The catalysed reaction is H2O(in) = H2O(out). It catalyses the reaction H2O2(out) = H2O2(in). It carries out the reaction formamide(out) = formamide(in). The enzyme catalyses methylamine(out) = methylamine(in). Its activity is regulated as follows. Reversibly gated by a two-step sulfenylation-persulfidation process in cells undergoing diverse stresses. In terms of biological role, channel that allows the facilitated permeation of water and uncharged molecules, such as hydrogen peroxide and the neutral form of ammonia (NH3), through cellular membranes such as plasma membrane, inner mitochondrial membrane and endoplasmic reticulum membrane of several tissues. The transport of ammonia neutral form induces a parallel transport of proton, at alkaline pH when the concentration of ammonia is high. However, it is unclear whether the transport of proton takes place via the aquaporin or via an endogenous pathway. Also, may transport ammonia analogs such as formamide and methylamine, a transport favourited at basic pH due to the increase of unprotonated (neutral) form, which is expected to favor diffusion. Does not transport urea or glycerol. The water transport mechanism is mercury- and copper-sensitive and passive in response to osmotic driving forces. At the canicular plasma membrane, mediates the osmotic transport of water toward the bile canaliculus and facilitates the cAMP-induced bile canalicular water secretion, a process involved in bile formation. In addition, mediates the hydrogen peroxide release from hepatocyte mitochondria that modulates the SREBF2-mediated cholesterol synthesis and facilitates the mitochondrial ammonia uptake which is metabolized into urea, mainly under glucagon stimulation. In B cells, transports the CYBB-generated hydrogen peroxide from the external leaflet of the plasma membrane to the cytosol to promote B cell activation and differentiation for signal amplification. In the small intestine and colon system, mediates water transport through mitochondria and apical membrane of epithelial cells. May play an important role in the adaptive response of proximal tubule cells to acidosis possibly facilitating mitochondrial ammonia transport. The polypeptide is Aquaporin-8 (Notomys alexis (Spinifex hopping mouse)).